A 968-amino-acid polypeptide reads, in one-letter code: RNA polymerase-associated protein RapA (968 aa).

Residues 163–332 form the Helicase ATP-binding domain; sequence EVGRRYAPRV…FARLRLLDPD (170 aa). 176-183 provides a ligand contact to ATP; sequence DEVGLGKT. The DEAH box motif lies at 278 to 281; that stretch reads DEAH. The region spanning 491–655 is the Helicase C-terminal domain; sequence RVDWLIEFLK…EFAEDLLNVL (165 aa).

The protein belongs to the SNF2/RAD54 helicase family. RapA subfamily. Interacts with the RNAP. Has a higher affinity for the core RNAP than for the holoenzyme. Its ATPase activity is stimulated by binding to RNAP.

Transcription regulator that activates transcription by stimulating RNA polymerase (RNAP) recycling in case of stress conditions such as supercoiled DNA or high salt concentrations. Probably acts by releasing the RNAP, when it is trapped or immobilized on tightly supercoiled DNA. Does not activate transcription on linear DNA. Probably not involved in DNA repair. The polypeptide is RNA polymerase-associated protein RapA (Shewanella baltica (strain OS155 / ATCC BAA-1091)).